The following is a 34-amino-acid chain: AGSKSRSRSRSRSRSKSPAKSASPKSAASPRASR.

Residues 1 to 17 (AGSKSRSRSRSRSRSKS) are compositionally biased toward basic residues. Residues 1 to 34 (AGSKSRSRSRSRSRSKSPAKSASPKSAASPRASR) form a disordered region. 7 repeat units span residues 3–4 (SK), 5–6 (SR), 7–8 (SR), 9–10 (SR), 11–12 (SR), 13–14 (SR), and 15–16 (SK). Residues 3-16 (SKSRSRSRSRSRSK) are 7 X 2 AA tandem repeats of S-[KR]. A compositionally biased stretch (low complexity) spans 18–34 (PAKSASPKSAASPRASR).

In terms of tissue distribution, sperm.

The protein localises to the nucleus. The protein is Sperm protein EM1 of Ensis minor (Razor shell).